A 529-amino-acid polypeptide reads, in one-letter code: GMP synthase [glutamine-hydrolyzing] (529 aa).

A Glutamine amidotransferase type-1 domain is found at 3 to 204 (TVAIVDFGSQ…FLKIAGCTRD (202 aa)). Cys-87 serves as the catalytic Nucleophile. Residues His-179 and Glu-181 contribute to the active site. Residues 205-395 (WTMGSFLHTQ…LGLPSAILDR (191 aa)) form the GMPS ATP-PPase domain. 232–238 (SGGVDSS) provides a ligand contact to ATP.

In terms of assembly, homodimer.

The enzyme catalyses XMP + L-glutamine + ATP + H2O = GMP + L-glutamate + AMP + diphosphate + 2 H(+). It participates in purine metabolism; GMP biosynthesis; GMP from XMP (L-Gln route): step 1/1. Its function is as follows. Catalyzes the synthesis of GMP from XMP. This is GMP synthase [glutamine-hydrolyzing] from Anaplasma marginale (strain St. Maries).